An 87-amino-acid polypeptide reads, in one-letter code: Small ribosomal subunit protein uS15 (87 aa).

Belongs to the universal ribosomal protein uS15 family. As to quaternary structure, part of the 30S ribosomal subunit. Forms a bridge to the 50S subunit in the 70S ribosome, contacting the 23S rRNA.

Its function is as follows. One of the primary rRNA binding proteins, it binds directly to 16S rRNA where it helps nucleate assembly of the platform of the 30S subunit by binding and bridging several RNA helices of the 16S rRNA. Functionally, forms an intersubunit bridge (bridge B4) with the 23S rRNA of the 50S subunit in the ribosome. The protein is Small ribosomal subunit protein uS15 of Alkaliphilus oremlandii (strain OhILAs) (Clostridium oremlandii (strain OhILAs)).